A 510-amino-acid polypeptide reads, in one-letter code: Scarecrow-like protein 29 (510 aa).

A disordered region spans residues 90 to 142 (LDLPPEIQQPNDQSRKRSHDGFLEAQQVKKSARSKRKAIKSSEKSSKDGNKEG). Residues 102–111 (QSRKRSHDGF) show a composition bias toward basic and acidic residues. Basic residues predominate over residues 119 to 128 (KSARSKRKAI). Residues 129-142 (KSSEKSSKDGNKEG) are compositionally biased toward basic and acidic residues. The GRAS domain occupies 136–510 (KDGNKEGRWA…EAVSFCSLWK (375 aa)). The tract at residues 143-205 (RWAEKLLNPC…HLSSSSVSSS (63 aa)) is leucine repeat I (LRI). A VHIID region spans residues 224 to 294 (LLKFYEVSPW…GPPPRVRITV (71 aa)). The VHIID signature appears at 259 to 263 (LHIID). Positions 312-337 (NYGSQLLGFARSLKINLQISVLDKLQ) are leucine repeat II (LRII). Positions 347–435 (LIVCAQFRLH…RKLMEGEATK (89 aa)) are PFYRE. The segment at 438–510 (MNAGDMNEGK…EAVSFCSLWK (73 aa)) is SAW.

This sequence belongs to the GRAS family. In terms of tissue distribution, expressed in seedlings, roots and flowers.

The protein localises to the nucleus. Probable transcription factor involved in plant development. This Arabidopsis thaliana (Mouse-ear cress) protein is Scarecrow-like protein 29 (SCL29).